The chain runs to 74 residues: Lambda-hexatoxin-Hv1d (74 aa).

The first 22 residues, 1–22 (MNTATCFIVLLVVATVIGGIEA), serve as a signal peptide directing secretion. Positions 23–35 (GESDMRKDVMGLF) are excised as a propeptide. 4 disulfides stabilise this stretch: Cys-40/Cys-54, Cys-47/Cys-59, Cys-50/Cys-51, and Cys-53/Cys-69.

It belongs to the neurotoxin 11 (kappa toxin) family. In terms of tissue distribution, expressed by the venom gland.

It is found in the secreted. Functionally, this excitatory toxin inhibits insect calcium-activated potassium (KCa) channels (Slo-type). The polypeptide is Lambda-hexatoxin-Hv1d (Hadronyche versuta (Blue mountains funnel-web spider)).